The chain runs to 84 residues: U8-theraphotoxin-Hhn1c 2 (84 aa).

The N-terminal stretch at 1-21 (MKVVLLVCLVWMMAMMELVSC) is a signal peptide. Cystine bridges form between cysteine 23-cysteine 35, cysteine 29-cysteine 44, cysteine 34-cysteine 67, cysteine 54-cysteine 75, and cysteine 69-cysteine 81.

It belongs to the AVIT (prokineticin) family. As to expression, expressed by the venom gland.

It localises to the secreted. This is U8-theraphotoxin-Hhn1c 2 from Cyriopagopus hainanus (Chinese bird spider).